A 94-amino-acid chain; its full sequence is MPAPIEVGRICVKTAGREAGKYCVVVDIVDENFVIITGPKDVTGVKRRRCNIKHLEPTPEKVDIDRGASDEEVKEALEEAGLLDLMKEGIVSGS.

This sequence belongs to the eukaryotic ribosomal protein eL14 family.

The chain is Large ribosomal subunit protein eL14 from Methanopyrus kandleri (strain AV19 / DSM 6324 / JCM 9639 / NBRC 100938).